A 33-amino-acid polypeptide reads, in one-letter code: U-limacoditoxin(13)-As11 (33 aa).

An N-terminal signal peptide occupies residues 1–19 (MFKLLLVLALTMLAQSALA). Position 32 is a phenylalanine amide (phenylalanine 32).

It belongs to the FARP (FMRFamide related peptide) family. In terms of tissue distribution, expressed by the venom secretory cell of the spine. The spine is a cuticular structure containing a single large nucleated venom-secreting cell at its base. It is an independent unit capable of producing, storing and injecting venom. On the back of A.stimulea caterpillars, spines are grouped together by 50 to 100 to form scoli, of which there are eight.

The protein resides in the secreted. In terms of biological role, is toxic when injected into Drosophila melanogaster. Also shows a low anthelmintic activity against the parasitic nematode H.contortus (drug susceptible Kirby isolate). This Acharia stimulea (Saddleback caterpillar moth) protein is U-limacoditoxin(13)-As11.